We begin with the raw amino-acid sequence, 199 residues long: Signal peptidase complex subunit 2 (199 aa).

The Cytoplasmic segment spans residues M1 to G49. A helical membrane pass occupies residues L50–D72. The Lumenal portion of the chain corresponds to F73–R81. The helical transmembrane segment at P82–F104 threads the bilayer. The Cytoplasmic segment spans residues R105 to N199.

The protein belongs to the SPCS2 family. As to quaternary structure, component of the signal peptidase complex (SPC) composed of a catalytic subunit twr/SEC11 and three accessory subunits Spase12/SPCS1, Spase25/SPCS2 and Spase22-23/SPCS3. The complex induces a local thinning of the ER membrane which is used to measure the length of the signal peptide (SP) h-region of protein substrates. This ensures the selectivity of the complex towards h-regions shorter than 18-20 amino acids.

It is found in the endoplasmic reticulum membrane. Its function is as follows. Component of the signal peptidase complex (SPC) which catalyzes the cleavage of N-terminal signal sequences from nascent proteins as they are translocated into the lumen of the endoplasmic reticulum. Enhances the enzymatic activity of SPC and facilitates the interactions between different components of the translocation site. The sequence is that of Signal peptidase complex subunit 2 (Spase25) from Drosophila melanogaster (Fruit fly).